The sequence spans 156 residues: Small ribosomal subunit protein bS6 (156 aa).

Positions 98–156 are disordered; the sequence is GHDFRDQRSHHGQAGEFRKREPQQKSKEQSEFSKEKKSFSKSVTKKTVVSKPKETKEEK. Residues 113-135 show a composition bias toward basic and acidic residues; the sequence is EFRKREPQQKSKEQSEFSKEKKS. The segment covering 137-147 has biased composition (low complexity); sequence SKSVTKKTVVS.

This sequence belongs to the bacterial ribosomal protein bS6 family.

Binds together with bS18 to 16S ribosomal RNA. In Mycoplasmopsis synoviae (strain 53) (Mycoplasma synoviae), this protein is Small ribosomal subunit protein bS6.